Consider the following 404-residue polypeptide: Glucose-1-phosphate adenylyltransferase 2 (404 aa).

Residues Y97, G162, 177–178 (EK), and S195 each bind alpha-D-glucose 1-phosphate.

The protein belongs to the bacterial/plant glucose-1-phosphate adenylyltransferase family. As to quaternary structure, homotetramer.

The catalysed reaction is alpha-D-glucose 1-phosphate + ATP + H(+) = ADP-alpha-D-glucose + diphosphate. Its pathway is glycan biosynthesis; glycogen biosynthesis. Functionally, involved in the biosynthesis of ADP-glucose, a building block required for the elongation reactions to produce glycogen. Catalyzes the reaction between ATP and alpha-D-glucose 1-phosphate (G1P) to produce pyrophosphate and ADP-Glc. The protein is Glucose-1-phosphate adenylyltransferase 2 of Vibrio vulnificus (strain CMCP6).